The primary structure comprises 291 residues: MALILDGKSLSKKIREEIKKEVENFTSKGFRPPALAVILVGNDPASEIYVNNKRKACEKVGIKSLFYHLPQDVSEEKLLGLIYELNMNEEVDGILVQLPLPKHIDQTRVILSISPEKDVDGFHPENMGKLVAQIEDGFIPCTPLGIDILLKHYGIDVKGKDVTIVGAGFIVGRPLSLLMLWRNATVSVCHIHTKDVKKFTKEADILISATGVPHLIKEDMIKEGAVVVDVGISRLNGKIVGDVDFERVKEKASAITPVPGGVGPMTVTALLLNTLKSYKRKFAHLISTTNP.

NADP(+) is bound by residues 166 to 168 (GAG), I191, and I232.

This sequence belongs to the tetrahydrofolate dehydrogenase/cyclohydrolase family. In terms of assembly, homodimer.

It carries out the reaction (6R)-5,10-methylene-5,6,7,8-tetrahydrofolate + NADP(+) = (6R)-5,10-methenyltetrahydrofolate + NADPH. The enzyme catalyses (6R)-5,10-methenyltetrahydrofolate + H2O = (6R)-10-formyltetrahydrofolate + H(+). It functions in the pathway one-carbon metabolism; tetrahydrofolate interconversion. Its function is as follows. Catalyzes the oxidation of 5,10-methylenetetrahydrofolate to 5,10-methenyltetrahydrofolate and then the hydrolysis of 5,10-methenyltetrahydrofolate to 10-formyltetrahydrofolate. This is Bifunctional protein FolD from Aquifex aeolicus (strain VF5).